Here is a 496-residue protein sequence, read N- to C-terminus: Chaperone SurA (496 aa).

The signal sequence occupies residues 1-42 (MACKSTAVRSATRVAPTRRLGMVTGALVALMAGAALLPAAHA). Positions 53 to 80 (RGIFTTPDASPSQPLLRGTLPGPSTASG) are disordered. 2 PpiC domains span residues 235–337 (VQEY…KLVD) and 349–447 (VAQT…QVEG).

It localises to the periplasm. The catalysed reaction is [protein]-peptidylproline (omega=180) = [protein]-peptidylproline (omega=0). In terms of biological role, chaperone involved in the correct folding and assembly of outer membrane proteins. Recognizes specific patterns of aromatic residues and the orientation of their side chains, which are found more frequently in integral outer membrane proteins. May act in both early periplasmic and late outer membrane-associated steps of protein maturation. In Ralstonia nicotianae (strain ATCC BAA-1114 / GMI1000) (Ralstonia solanacearum), this protein is Chaperone SurA.